Consider the following 190-residue polypeptide: MKRFMQIWKPAVVGFLLLTLMCGVVYPGIVTIFASAAFHDKANGSIIEEKRADGTTGKVGSAEIGQTFTKPEYLIGRAASDGVATNLNPTSEEQKQLVEKRIAWWHKLDPTNNRVIPMDLVTASASGVDPDISEAAAAYQVDRISRERGISTKQVKEIIAEHTSDRLLGFWGEPTVNVLQVNLALDRLKM.

A helical transmembrane segment spans residues 13 to 33 (VGFLLLTLMCGVVYPGIVTIF).

It belongs to the KdpC family. As to quaternary structure, the system is composed of three essential subunits: KdpA, KdpB and KdpC.

It is found in the cell membrane. In terms of biological role, part of the high-affinity ATP-driven potassium transport (or Kdp) system, which catalyzes the hydrolysis of ATP coupled with the electrogenic transport of potassium into the cytoplasm. This subunit acts as a catalytic chaperone that increases the ATP-binding affinity of the ATP-hydrolyzing subunit KdpB by the formation of a transient KdpB/KdpC/ATP ternary complex. The sequence is that of Potassium-transporting ATPase KdpC subunit from Listeria monocytogenes serotype 4b (strain CLIP80459).